Consider the following 373-residue polypeptide: Histidinol-phosphate aminotransferase (373 aa).

Position 233 is an N6-(pyridoxal phosphate)lysine (K233).

Belongs to the class-II pyridoxal-phosphate-dependent aminotransferase family. Histidinol-phosphate aminotransferase subfamily. In terms of assembly, homodimer. Pyridoxal 5'-phosphate is required as a cofactor.

The catalysed reaction is L-histidinol phosphate + 2-oxoglutarate = 3-(imidazol-4-yl)-2-oxopropyl phosphate + L-glutamate. It functions in the pathway amino-acid biosynthesis; L-histidine biosynthesis; L-histidine from 5-phospho-alpha-D-ribose 1-diphosphate: step 7/9. The sequence is that of Histidinol-phosphate aminotransferase from Nitratidesulfovibrio vulgaris (strain DP4) (Desulfovibrio vulgaris).